Here is a 348-residue protein sequence, read N- to C-terminus: RNA 3'-terminal phosphate cyclase (348 aa).

Residues Gln-107 and 290–294 each bind ATP; that span reads HLADQ. His-316 acts as the Tele-AMP-histidine intermediate in catalysis.

This sequence belongs to the RNA 3'-terminal cyclase family. Type 1 subfamily.

It is found in the cytoplasm. The catalysed reaction is a 3'-end 3'-phospho-ribonucleotide-RNA + ATP = a 3'-end 2',3'-cyclophospho-ribonucleotide-RNA + AMP + diphosphate. Its function is as follows. Catalyzes the conversion of 3'-phosphate to a 2',3'-cyclic phosphodiester at the end of RNA. The mechanism of action of the enzyme occurs in 3 steps: (A) adenylation of the enzyme by ATP; (B) transfer of adenylate to an RNA-N3'P to produce RNA-N3'PP5'A; (C) and attack of the adjacent 2'-hydroxyl on the 3'-phosphorus in the diester linkage to produce the cyclic end product. The biological role of this enzyme is unknown but it is likely to function in some aspects of cellular RNA processing. This is RNA 3'-terminal phosphate cyclase (rtcA) from Nostoc sp. (strain PCC 7120 / SAG 25.82 / UTEX 2576).